Consider the following 1272-residue polypeptide: Protein diaphanous homolog 1 (1272 aa).

Met-1 is subject to N-acetylmethionine. The segment covering Met-1–Arg-12 has biased composition (gly residues). A disordered region spans residues Met-1–Leu-84. Residues Ser-7, Ser-22, and Ser-36 each carry the phosphoserine modification. Residues Leu-44–Asn-65 are compositionally biased toward basic and acidic residues. Residues Ala-67 to Leu-84 are compositionally biased toward polar residues. The GBD/FH3 domain occupies Leu-84–Asp-449. Residues Met-468 to Val-572 are a coiled coil. A disordered region spans residues Pro-573–Phe-755. Composition is skewed to pro residues over residues Pro-574–Pro-589, Ile-596–Pro-622, and Ser-640–Pro-658. Positions Pro-583–Pro-764 constitute an FH1 domain. Low complexity predominate over residues Glu-659–Ala-674. Residues Ile-675–Phe-753 are compositionally biased toward pro residues. Thr-768 carries the phosphothreonine modification. Residues Pro-769–Lys-1171 form the FH2 domain. Positions Asp-1039–Thr-1196 form a coiled coil. N6-acetyllysine is present on residues Lys-1057 and Lys-1103. Tyr-1121 carries the post-translational modification Phosphotyrosine. The DAD domain maps to Asp-1194–Asn-1222. A phosphoserine mark is found at Ser-1251 and Ser-1254.

It belongs to the formin homology family. Diaphanous subfamily. As to quaternary structure, homodimer. Interacts with the GTP-bound form of RHOA. Interacts with RHOC, PFY1, MAPRE1 and BAIAP2. Interacts with APC; acts as a scaffold protein for MAPRE1 and APC to stabilize microtubules and promote cell migration. Interacts with SCAI. Interacts with DCAF7, via FH2 domain. Interacts with NCDN. Interacts with OSBPL10, OSBPL2, VIM, TUBB and DYN1. Post-translationally, phosphorylation at Thr-768 is stimulated by cAMP and regulates stability, complex formation and mitochondrial movement. Expressed in brain, heart, placenta, lung, kidney, pancreas, liver, skeletal muscle and cochlea. Expressed in platelets.

The protein resides in the cell membrane. Its subcellular location is the cell projection. It localises to the ruffle membrane. It is found in the cytoplasm. The protein localises to the cytoskeleton. The protein resides in the microtubule organizing center. Its subcellular location is the centrosome. It localises to the spindle. It is found in the nucleus. In terms of biological role, actin nucleation and elongation factor required for the assembly of F-actin structures, such as actin cables and stress fibers. Binds to the barbed end of the actin filament and slows down actin polymerization and depolymerization. Required for cytokinesis, and transcriptional activation of the serum response factor. DFR proteins couple Rho and Src tyrosine kinase during signaling and the regulation of actin dynamics. Functions as a scaffold protein for MAPRE1 and APC to stabilize microtubules and promote cell migration. Has neurite outgrowth promoting activity. Acts in a Rho-dependent manner to recruit PFY1 to the membrane. In hear cells, it may play a role in the regulation of actin polymerization in hair cells. The MEMO1-RHOA-DIAPH1 signaling pathway plays an important role in ERBB2-dependent stabilization of microtubules at the cell cortex. It controls the localization of APC and CLASP2 to the cell membrane, via the regulation of GSK3B activity. In turn, membrane-bound APC allows the localization of the MACF1 to the cell membrane, which is required for microtubule capture and stabilization. Plays a role in the regulation of cell morphology and cytoskeletal organization. Required in the control of cell shape. Plays a role in brain development. Also acts as an actin nucleation and elongation factor in the nucleus by promoting nuclear actin polymerization inside the nucleus to drive serum-dependent SRF-MRTFA activity. This chain is Protein diaphanous homolog 1 (DIAPH1), found in Homo sapiens (Human).